The primary structure comprises 199 residues: LPICPSGSVNCQVSLGELFDRAVKLSHYIHFLSSEMFNEFDERYAQGRGFITKAVNGCHTASLTTPEDKEQAQQIHHEDLLNLVLGVLRSWNDPLLHLVTEVQRIKEAPDTILWKAVEIEEQNKRLLEGMEKIVGRVQPGDTGNEVYSRWSGLPSLQLADEDSRLFAFYNLLHCGRRDSHKIDNYLKLLKCRLIHDSNC.

3 disulfide bridges follow: cysteine 4–cysteine 11, cysteine 58–cysteine 174, and cysteine 191–cysteine 199.

The protein belongs to the somatotropin/prolactin family.

The protein resides in the secreted. In Alligator mississippiensis (American alligator), this protein is Prolactin-2.